Here is an 872-residue protein sequence, read N- to C-terminus: Protein translocase subunit SecA (872 aa).

ATP contacts are provided by residues Gln-87, 105–109, and Asp-510; that span reads GEGKT. 4 residues coordinate Zn(2+): Cys-847, Cys-849, Cys-858, and Cys-859.

The protein belongs to the SecA family. As to quaternary structure, monomer and homodimer. Part of the essential Sec protein translocation apparatus which comprises SecA, SecYEG and auxiliary proteins SecDF-YajC and YidC. The cofactor is Zn(2+).

It localises to the cell inner membrane. The protein localises to the cytoplasm. It carries out the reaction ATP + H2O + cellular proteinSide 1 = ADP + phosphate + cellular proteinSide 2.. In terms of biological role, part of the Sec protein translocase complex. Interacts with the SecYEG preprotein conducting channel. Has a central role in coupling the hydrolysis of ATP to the transfer of proteins into and across the cell membrane, serving as an ATP-driven molecular motor driving the stepwise translocation of polypeptide chains across the membrane. This chain is Protein translocase subunit SecA, found in Aliarcobacter butzleri (strain RM4018) (Arcobacter butzleri).